A 714-amino-acid chain; its full sequence is Calpain-1 catalytic subunit (714 aa).

Residue Ser2 is modified to N-acetylserine. The Calpain catalytic domain occupies 55–354 (LFRDEAFPPV…FTRLEICNLT (300 aa)). Ca(2+) is bound by residues Gln109 and Asp114. Active-site residues include Cys115, His272, and Asn296. Ca(2+) is bound by residues Asn316, Asp318, and Asp323. Thr354 is subject to Phosphothreonine. The domain III stretch occupies residues 355 to 526 (PDALKSRTIR…KSAGTVELDD (172 aa)). Positions 527-542 (QIQANLPDEQVLSEEE) are linker. 4 consecutive EF-hand domains span residues 541 to 576 (EEID…IISK), 585 to 618 (FSLE…NRIR), 615 to 650 (NRIR…AGFK), and 680 to 714 (VRLE…TMFA). The interval 543-713 (IDENFKALFR…LFKWLQLTMF (171 aa)) is domain IV. Residues Asp598, Asp600, Asn602, Lys604, Glu609, Asp628, Asp630, Ser632, Ser634, and Glu639 each contribute to the Ca(2+) site.

This sequence belongs to the peptidase C2 family. As to quaternary structure, forms a heterodimer with a small (regulatory) subunit CAPNS1. It depends on Ca(2+) as a cofactor. Undergoes calcium-induced successive autoproteolytic cleavages that generate a membrane-bound 78 kDa active form and an intracellular 75 kDa active form. Calpastatin reduces with high efficiency the transition from 78 kDa to 75 kDa calpain forms. Ubiquitous.

It is found in the cytoplasm. Its subcellular location is the cell membrane. It carries out the reaction Broad endopeptidase specificity.. Activated by micromolar concentrations of calcium and inhibited by calpastatin. In terms of biological role, calcium-regulated non-lysosomal thiol-protease which catalyzes limited proteolysis of substrates involved in cytoskeletal remodeling and signal transduction. Proteolytically cleaves CTBP1 at 'Asn-375', 'Gly-387' and 'His-409'. Cleaves and activates caspase-7 (CASP7). This chain is Calpain-1 catalytic subunit, found in Homo sapiens (Human).